The primary structure comprises 342 residues: uncharacterized protein (342 aa).

The next 3 helical transmembrane spans lie at Y35–S55, L134–F154, and L161–S180. Disordered regions lie at residues S198–N220 and I311–N342.

The protein localises to the membrane. This is an uncharacterized protein from Dictyostelium discoideum (Social amoeba).